The following is a 140-amino-acid chain: Organic hydroperoxide resistance protein-like (140 aa).

This sequence belongs to the OsmC/Ohr family.

The polypeptide is Organic hydroperoxide resistance protein-like (Mycoplasma genitalium (strain ATCC 33530 / DSM 19775 / NCTC 10195 / G37) (Mycoplasmoides genitalium)).